We begin with the raw amino-acid sequence, 446 residues long: MTSSLPNIGFISLGCPKNLVDSERILTELRSDGYNIIPSYENADLVIVNTCGFIDSAVQESLEAIGEALEENGKVIVTGCLGAKEDRIREVHPKVLEVTGPHSYEAVMQQVHKYVPKPAYNPYVNLVPKQGVKLTPKHYAYLKISEGCDHRCTFCIIPSMRGDLDSRSITQVLDEAKRLVEAGVKEILVVSQDTSAYALDRSKEEQNKTVFWNGMPIKNNLISLCEQLGKLGVWVRLHYVYPYPHVDQLIPLMAEGKILPYLDIPLQHASPKILKAMKRPGSIERTLERIKKWREICPDLTLRSTFIVGFPGESEEDFQLLLDFLKEALLDRVGCFKFSPVEGAIATEMPDQVPEEVKEARFHRFMQLQQEISAARLQQKVGKVFTVLVDEVDEEGIIARSIADAPEIDGVVYIDNPNRVAVKAGQFIEVKITRADAYDLYASLIN.

The MTTase N-terminal domain maps to 6 to 116 (PNIGFISLGC…VMQQVHKYVP (111 aa)). [4Fe-4S] cluster is bound by residues C15, C51, C80, C148, C152, and C155. The region spanning 134–375 (LTPKHYAYLK…MQLQQEISAA (242 aa)) is the Radical SAM core domain. The 69-residue stretch at 378-446 (QQKVGKVFTV…AYDLYASLIN (69 aa)) folds into the TRAM domain.

The protein belongs to the methylthiotransferase family. RimO subfamily. [4Fe-4S] cluster is required as a cofactor.

The protein localises to the cytoplasm. It catalyses the reaction L-aspartate(89)-[ribosomal protein uS12]-hydrogen + (sulfur carrier)-SH + AH2 + 2 S-adenosyl-L-methionine = 3-methylsulfanyl-L-aspartate(89)-[ribosomal protein uS12]-hydrogen + (sulfur carrier)-H + 5'-deoxyadenosine + L-methionine + A + S-adenosyl-L-homocysteine + 2 H(+). Its function is as follows. Catalyzes the methylthiolation of an aspartic acid residue of ribosomal protein uS12. This is Ribosomal protein uS12 methylthiotransferase RimO from Pasteurella multocida (strain Pm70).